The chain runs to 37 residues: Large ribosomal subunit protein bL36 (37 aa).

The protein belongs to the bacterial ribosomal protein bL36 family.

This is Large ribosomal subunit protein bL36 from Staphylococcus saprophyticus subsp. saprophyticus (strain ATCC 15305 / DSM 20229 / NCIMB 8711 / NCTC 7292 / S-41).